We begin with the raw amino-acid sequence, 175 residues long: Putative carbonic anhydrase-like protein YbcF (175 aa).

Belongs to the beta-class carbonic anhydrase family.

This chain is Putative carbonic anhydrase-like protein YbcF (ybcF), found in Bacillus subtilis (strain 168).